We begin with the raw amino-acid sequence, 592 residues long: Arginine--tRNA ligase (592 aa).

Positions 112–122 (VNPNKELHVGH) match the 'HIGH' region motif.

Belongs to the class-I aminoacyl-tRNA synthetase family. Monomer.

Its subcellular location is the cytoplasm. The catalysed reaction is tRNA(Arg) + L-arginine + ATP = L-arginyl-tRNA(Arg) + AMP + diphosphate. The protein is Arginine--tRNA ligase of Thermus thermophilus (strain ATCC BAA-163 / DSM 7039 / HB27).